The sequence spans 557 residues: MMSLNLAHQTGAAAAVAPAAPRTAVVAAAAGTVSAPAVAPAAAPSLQLQTQTVDPAAPAQGPDLPMAFQALVESLPEEQHPDVGGEERRKVGVPVYVMMPLDTVRKDGNGLNRRKAVEASLKALKSAGAEGIMVDVWWGIAECEGPGRYNFTGYMELMEMAKKNGLKVQAVMSFHQCGGNVGDSVTIPLPKWVLEEMDKDQDLAYTDRSGRRNYEYLSLGADAMPVLKGRTPVQCYGDFMRAFRDHFAAFMGNTIVEIQVGMGPAGELRYPSYPESNGTWRFPGIGEFQCYDRYMLSSLKAAAEAVGKPEWGNAGPGDSGGYNDWPEDSPFFRREGGWNTPYGEFFMSWYSQMLLEHGERILSAASGVYTGTPGVKISVKVAGIHWHYGTRSHAAELTAGYYNTRHHDGYQPIARMLARHGAVLNFTCVEMRNHEQPQDAQCRPEELVQQVAAAARESGVGLAGENALPRYDETAHDQIVTTAAEKAEEERMVAFTYLRMGPDLFQPDNWRRFAAFVKRMTESGVRDVCREQVEREAQGVAHATGSLVHEAAVALSN.

A chloroplast-targeting transit peptide spans Met-1–Val-38. Asp-135, His-175, and Asp-183 together coordinate substrate. Glu-267 functions as the Proton donor in the catalytic mechanism. Lys-380, His-385, and Thr-427 together coordinate substrate. Residue Glu-465 is the Proton acceptor of the active site. Substrate-binding positions include Asn-466–Ala-467 and Arg-499.

It belongs to the glycosyl hydrolase 14 family.

The protein localises to the plastid. It localises to the chloroplast. The enzyme catalyses Hydrolysis of (1-&gt;4)-alpha-D-glucosidic linkages in polysaccharides so as to remove successive maltose units from the non-reducing ends of the chains.. Its function is as follows. Possesses beta-amylase activity in vitro. May be involved in cold resistance by mediating the accumulation of maltose upon freezing stress, thus contributing to the protection of membranes. This chain is Beta-amylase 2, chloroplastic, found in Oryza sativa subsp. japonica (Rice).